The sequence spans 249 residues: Bax inhibitor 1 (249 aa).

Transmembrane regions (helical) follow at residues 39-59 (LVYL…YLHV), 65-85 (GMLT…VPVF), 93-113 (ILLA…KLAV), 119-139 (ILVT…CAAI), 151-171 (GLLS…SIFG), and 213-233 (HALT…VIML).

This sequence belongs to the BI1 family. As to expression, ubiquitous.

It localises to the membrane. Suppressor of apoptosis. This chain is Bax inhibitor 1 (BI1), found in Oryza sativa subsp. japonica (Rice).